Reading from the N-terminus, the 921-residue chain is Sodium/calcium exchanger 2 (921 aa).

The first 20 residues, Met-1 to Gly-20, serve as a signal peptide directing secretion. The Extracellular segment spans residues Ala-21–Lys-68. A disordered region spans residues Ala-22–Gly-42. Residue Asn-34 is glycosylated (N-linked (GlcNAc...) asparagine). Residues Ala-69–Ala-90 form a helical membrane-spanning segment. The Cytoplasmic segment spans residues Asp-91–Asn-130. The helical transmembrane segment at Leu-131–Gly-152 threads the bilayer. Residues Ala-135–Val-175 form an Alpha-1 repeat. The Extracellular portion of the chain corresponds to His-153–Thr-164. A helical membrane pass occupies residues Ile-165 to Pro-185. Over Ala-186–Arg-196 the chain is Cytoplasmic. A helical transmembrane segment spans residues Val-197–Phe-219. The Extracellular portion of the chain corresponds to Ser-220 to Gly-222. Residues Val-223–Ala-246 traverse the membrane as a helical segment. The Cytoplasmic portion of the chain corresponds to Asp-247 to Ser-720. Residues Lys-248–Gly-267 are putative calmodulin-binding region. Calx-beta domains follow at residues Gly-384–Leu-483 and Ala-512–Gly-612. Positions 407, 443, 468, 469, 471, 473, 476, 518, 519, 520, 536, 598, 599, and 600 each coordinate Ca(2+). Ser-622 is subject to Phosphoserine. A Ca(2+)-binding site is contributed by Glu-665. Residues Cys-721–Val-740 traverse the membrane as a helical segment. Residues Pro-741–His-747 lie on the Extracellular side of the membrane. The helical transmembrane segment at Gly-748–Ala-770 threads the bilayer. The Cytoplasmic segment spans residues Ser-771–His-772. The helical transmembrane segment at Phe-773–Leu-791 threads the bilayer. Residues Ala-790 to Val-826 form an Alpha-2 repeat. At Gly-792 to Asn-822 the chain is on the extracellular side. Asn-817 carries N-linked (GlcNAc...) asparagine glycosylation. Residues Ala-823 to Val-843 traverse the membrane as a helical segment. Topologically, residues Gln-844–Thr-854 are cytoplasmic. The helical transmembrane segment at Leu-855–Tyr-875 threads the bilayer. Residues Arg-876–Lys-892 are Extracellular-facing. A helical transmembrane segment spans residues Leu-893–Phe-909. Residues Ala-910–Phe-921 lie on the Cytoplasmic side of the membrane.

The protein belongs to the Ca(2+):cation antiporter (CaCA) (TC 2.A.19) family. SLC8 subfamily.

The protein resides in the cell membrane. It localises to the basolateral cell membrane. It is found in the perikaryon. Its subcellular location is the cell projection. The protein localises to the dendrite. The protein resides in the dendritic spine. It catalyses the reaction Ca(2+)(in) + 3 Na(+)(out) = Ca(2+)(out) + 3 Na(+)(in). Its activity is regulated as follows. Calcium transport is down-regulated by Na(+) and stimulated by Ca(2+). Mediates the electrogenic exchange of Ca(2+) against Na(+) ions across the cell membrane, and thereby contributes to the regulation of cytoplasmic Ca(2+) levels and Ca(2+)-dependent cellular processes. Contributes to cellular Ca(2+) homeostasis in excitable cells. Contributes to the rapid decrease of cytoplasmic Ca(2+) levels back to baseline after neuronal activation, and thereby contributes to modulate synaptic plasticity, learning and memory. Plays a role in regulating urinary Ca(2+) and Na(+) excretion. The sequence is that of Sodium/calcium exchanger 2 (SLC8A2) from Homo sapiens (Human).